The sequence spans 502 residues: Putative diacyglycerol O-acyltransferase Rv1760 (502 aa).

Catalysis depends on H174, which acts as the Proton acceptor.

It belongs to the long-chain O-acyltransferase family.

The enzyme catalyses an acyl-CoA + a 1,2-diacyl-sn-glycerol = a triacyl-sn-glycerol + CoA. It catalyses the reaction di-(9Z)-octadecenoylglycerol + (9Z)-octadecenoyl-CoA = 1,2,3-tri-(9Z-octadecenoyl)-glycerol + CoA. It functions in the pathway glycerolipid metabolism; triacylglycerol biosynthesis. Functionally, catalyzes the terminal and only committed step in triacylglycerol synthesis by using diacylglycerol and fatty acyl CoA as substrates. Required for storage lipid synthesis. In terms of biological role, upon expression in E.coli functions weakly as a triacylglycerol synthase, making triacylglycerol (TG) from diolein and long-chain fatty acyl-CoA. Has very weak wax synthase activity, incorporating palmityl alcohol into wax esters in the presence of palmitoyl-CoA. This is Putative diacyglycerol O-acyltransferase Rv1760 from Mycobacterium tuberculosis (strain ATCC 25618 / H37Rv).